Here is a 263-residue protein sequence, read N- to C-terminus: Protein M1425_2021 (263 aa).

The protein belongs to the CinA family.

In Saccharolobus islandicus (strain M.14.25 / Kamchatka #1) (Sulfolobus islandicus), this protein is Protein M1425_2021.